Reading from the N-terminus, the 170-residue chain is Adenine phosphoribosyltransferase (170 aa).

Belongs to the purine/pyrimidine phosphoribosyltransferase family. In terms of assembly, homodimer.

It is found in the cytoplasm. It catalyses the reaction AMP + diphosphate = 5-phospho-alpha-D-ribose 1-diphosphate + adenine. The protein operates within purine metabolism; AMP biosynthesis via salvage pathway; AMP from adenine: step 1/1. Functionally, catalyzes a salvage reaction resulting in the formation of AMP, that is energically less costly than de novo synthesis. This Prochlorococcus marinus (strain MIT 9312) protein is Adenine phosphoribosyltransferase.